The sequence spans 120 residues: uncharacterized protein (120 aa).

A helical transmembrane segment spans residues 22–44 (ITVASCIGAAQGALFSIASALLL). N-linked (GlcNAc...) asparagine glycosylation is present at asparagine 114.

It localises to the membrane. This is an uncharacterized protein from Saccharomyces cerevisiae (strain ATCC 204508 / S288c) (Baker's yeast).